Reading from the N-terminus, the 328-residue chain is Helicase VP6-A (328 aa).

Disordered regions lie at residues 31 to 128 (DWTE…TGAN) and 180 to 237 (VAEQ…SVGI). Basic and acidic residues-rich tracts occupy residues 36–61 (ETNKESKAERKEGDKAEELKDGEGRN), 71–83 (AKETKDARCDRRI), and 96–109 (PGERANENVDRGDG). Lys110 provides a ligand contact to ATP. A compositionally biased stretch (gly residues) spans 110–128 (KVGGGGGDADAGVGTTGAN). Basic and acidic residues-rich tracts occupy residues 180–205 (VAEQTERLRDLRRKEKSGAHAKAAER) and 214–230 (PHGDAQREGPEEEKTSE).

Belongs to the orbivirus VP6 family. Homohexamer.

It localises to the virion. The catalysed reaction is ATP + H2O = ADP + phosphate + H(+). In terms of biological role, ATP dependent RNA helicase essential for RNA packaging and viral transcription. Possesses ss- and dsRNA-binding capacity. This chain is Helicase VP6-A (Segment-9), found in Bluetongue virus 1 (isolate South Africa) (BTV 1).